Consider the following 153-residue polypeptide: CASP-like protein 5B1 (153 aa).

Residues 1 to 20 (MRELAGSPGTWSGLSLRVGQ) lie on the Cytoplasmic side of the membrane. A helical transmembrane segment spans residues 21-41 (LVFAAASVCATASALGFAAYT). A topological domain (extracellular) is located at residue Ala42. A helical membrane pass occupies residues 43 to 63 (FCYLIASMGLQALWSLGLACL). Topologically, residues 64–76 (DCYALKFKKDLHS) are cytoplasmic. Residues 77-97 (AVLLSLFVVGDWVTAILSFAA) traverse the membrane as a helical segment. The Extracellular segment spans residues 98–128 (SCSAAGVVVLFDRDIYACRNPQLPCGRFELA). A helical transmembrane segment spans residues 129-149 (IACAFLSWAFSATSALVMFWL). At 150–153 (LASL) the chain is on the cytoplasmic side.

Belongs to the Casparian strip membrane proteins (CASP) family. Homodimer and heterodimers.

The protein localises to the cell membrane. This is CASP-like protein 5B1 from Oryza sativa subsp. indica (Rice).